Here is a 1007-residue protein sequence, read N- to C-terminus: Mediator of RNA polymerase II transcription subunit 5 (1007 aa).

It belongs to the Mediator complex subunit 5 family. Component of the Mediator complex.

The protein resides in the nucleus. Its function is as follows. Component of the Mediator complex, a coactivator involved in the regulated transcription of nearly all RNA polymerase II-dependent genes. Mediator functions as a bridge to convey information from gene-specific regulatory proteins to the basal RNA polymerase II transcription machinery. Mediator is recruited to promoters by direct interactions with regulatory proteins and serves as a scaffold for the assembly of a functional preinitiation complex with RNA polymerase II and the general transcription factors. The sequence is that of Mediator of RNA polymerase II transcription subunit 5 (nut1) from Aspergillus fumigatus (strain ATCC MYA-4609 / CBS 101355 / FGSC A1100 / Af293) (Neosartorya fumigata).